Reading from the N-terminus, the 133-residue chain is NADH dehydrogenase [ubiquinone] 1 alpha subcomplex subunit 6 (133 aa).

The protein belongs to the complex I LYR family. Complex I is composed of at least 49 different subunits.

It is found in the mitochondrion inner membrane. Functionally, accessory subunit of the mitochondrial membrane respiratory chain NADH dehydrogenase (Complex I), that is believed to be not involved in catalysis. Complex I functions in the transfer of electrons from NADH to the respiratory chain. The immediate electron acceptor for the enzyme is believed to be ubiquinone. In Arabidopsis thaliana (Mouse-ear cress), this protein is NADH dehydrogenase [ubiquinone] 1 alpha subcomplex subunit 6.